A 144-amino-acid polypeptide reads, in one-letter code: uncharacterized protein (144 aa).

The N-acetyltransferase domain maps to 2 to 144 (IELDAINPNN…EDSVLLSKKL (143 aa)).

Belongs to the acetyltransferase family.

Its subcellular location is the cytoplasm. The protein localises to the nucleus. This is an uncharacterized protein from Schizosaccharomyces pombe (strain 972 / ATCC 24843) (Fission yeast).